Reading from the N-terminus, the 246-residue chain is Isoprenyl transferase 1 (246 aa).

Aspartate 19 is a catalytic residue. Aspartate 19 lines the Mg(2+) pocket. Residues 20–23 (GNGR), tryptophan 24, arginine 32, histidine 36, and 64–66 (STD) each bind substrate. Catalysis depends on asparagine 67, which acts as the Proton acceptor. Substrate contacts are provided by residues tryptophan 68, arginine 70, arginine 180, and 186 to 188 (RLS). Mg(2+) is bound at residue glutamate 199.

It belongs to the UPP synthase family. Homodimer. The cofactor is Mg(2+).

Catalyzes the condensation of isopentenyl diphosphate (IPP) with allylic pyrophosphates generating different type of terpenoids. This is Isoprenyl transferase 1 from Bradyrhizobium diazoefficiens (strain JCM 10833 / BCRC 13528 / IAM 13628 / NBRC 14792 / USDA 110).